Consider the following 616-residue polypeptide: Dihydroxy-acid dehydratase (616 aa).

Mg(2+) is bound at residue Asp81. [2Fe-2S] cluster is bound at residue Cys122. 2 residues coordinate Mg(2+): Asp123 and Lys124. Lys124 is subject to N6-carboxylysine. Cys195 provides a ligand contact to [2Fe-2S] cluster. Mg(2+) is bound at residue Glu491. The active-site Proton acceptor is Ser517.

The protein belongs to the IlvD/Edd family. In terms of assembly, homodimer. It depends on [2Fe-2S] cluster as a cofactor. Mg(2+) serves as cofactor.

It carries out the reaction (2R)-2,3-dihydroxy-3-methylbutanoate = 3-methyl-2-oxobutanoate + H2O. The enzyme catalyses (2R,3R)-2,3-dihydroxy-3-methylpentanoate = (S)-3-methyl-2-oxopentanoate + H2O. The protein operates within amino-acid biosynthesis; L-isoleucine biosynthesis; L-isoleucine from 2-oxobutanoate: step 3/4. It participates in amino-acid biosynthesis; L-valine biosynthesis; L-valine from pyruvate: step 3/4. Functionally, functions in the biosynthesis of branched-chain amino acids. Catalyzes the dehydration of (2R,3R)-2,3-dihydroxy-3-methylpentanoate (2,3-dihydroxy-3-methylvalerate) into 2-oxo-3-methylpentanoate (2-oxo-3-methylvalerate) and of (2R)-2,3-dihydroxy-3-methylbutanoate (2,3-dihydroxyisovalerate) into 2-oxo-3-methylbutanoate (2-oxoisovalerate), the penultimate precursor to L-isoleucine and L-valine, respectively. The protein is Dihydroxy-acid dehydratase of Methylocella silvestris (strain DSM 15510 / CIP 108128 / LMG 27833 / NCIMB 13906 / BL2).